The primary structure comprises 242 residues: 3-dehydroquinate dehydratase (242 aa).

3-dehydroquinate is bound by residues 39–41 (EIR) and arginine 73. The active-site Proton donor/acceptor is histidine 135. Lysine 162 acts as the Schiff-base intermediate with substrate in catalysis. Positions 203 and 228 each coordinate 3-dehydroquinate.

Belongs to the type-I 3-dehydroquinase family. As to quaternary structure, homodimer.

It carries out the reaction 3-dehydroquinate = 3-dehydroshikimate + H2O. It participates in metabolic intermediate biosynthesis; chorismate biosynthesis; chorismate from D-erythrose 4-phosphate and phosphoenolpyruvate: step 3/7. Its function is as follows. Involved in the third step of the chorismate pathway, which leads to the biosynthesis of aromatic amino acids. Catalyzes the cis-dehydration of 3-dehydroquinate (DHQ) and introduces the first double bond of the aromatic ring to yield 3-dehydroshikimate. The polypeptide is 3-dehydroquinate dehydratase (Methanosarcina mazei (strain ATCC BAA-159 / DSM 3647 / Goe1 / Go1 / JCM 11833 / OCM 88) (Methanosarcina frisia)).